The chain runs to 147 residues: MKALLTLVFCLLPLAAQGKVYSRCELAAAMKRLGLDNYRGYSLGNWVCAANYESGFNTQATNRNTDGSTDYGILQINSRWWCDNGKTPRSKNACGIPCSVLLRSDITEAVRCAKRIVSDGDGMNAWVAWRNRCRGTDVSKWIRGCRL.

Positions 1 to 18 are cleaved as a signal peptide; it reads MKALLTLVFCLLPLAAQG. The region spanning 19–147 is the C-type lysozyme domain; the sequence is KVYSRCELAA…VSKWIRGCRL (129 aa). 4 disulfides stabilise this stretch: cysteine 24-cysteine 145, cysteine 48-cysteine 133, cysteine 82-cysteine 98, and cysteine 94-cysteine 112. Residues glutamate 53 and aspartate 70 contribute to the active site.

This sequence belongs to the glycosyl hydrolase 22 family.

Its subcellular location is the secreted. The catalysed reaction is Hydrolysis of (1-&gt;4)-beta-linkages between N-acetylmuramic acid and N-acetyl-D-glucosamine residues in a peptidoglycan and between N-acetyl-D-glucosamine residues in chitodextrins.. Its function is as follows. Lysozymes have primarily a bacteriolytic function; those in tissues and body fluids are associated with the monocyte-macrophage system and enhance the activity of immunoagents. The sequence is that of Lysozyme C-1 from Anas platyrhynchos (Mallard).